Here is a 539-residue protein sequence, read N- to C-terminus: Phospho-2-dehydro-3-deoxyheptonate aldolase 2, chloroplastic (539 aa).

Disordered stretches follow at residues M1–Q23 and V41–K70. Residues M1 to Q54 constitute a chloroplast transit peptide. A compositionally biased stretch (low complexity) spans S7–A21.

The protein belongs to the class-II DAHP synthase family.

Its subcellular location is the plastid. It is found in the chloroplast. It carries out the reaction D-erythrose 4-phosphate + phosphoenolpyruvate + H2O = 7-phospho-2-dehydro-3-deoxy-D-arabino-heptonate + phosphate. The protein operates within metabolic intermediate biosynthesis; chorismate biosynthesis; chorismate from D-erythrose 4-phosphate and phosphoenolpyruvate: step 1/7. The polypeptide is Phospho-2-dehydro-3-deoxyheptonate aldolase 2, chloroplastic (DAHPS2) (Oryza sativa subsp. japonica (Rice)).